Here is a 588-residue protein sequence, read N- to C-terminus: Probable G-protein coupled receptor 162 (588 aa).

Residues 1 to 17 lie on the Extracellular side of the membrane; that stretch reads MARGGLGAEEASLRSNA. Residues 18 to 38 traverse the membrane as a helical segment; the sequence is LSWLACGLLALLANAWIILSI. Topologically, residues 39–49 are cytoplasmic; the sequence is SAKQQKHKPLE. Residues 50–70 form a helical membrane-spanning segment; that stretch reads LLLCFLAGTHILMAAVPLTTF. Residues 71-91 are Extracellular-facing; that stretch reads AVVQLRRQASSDYDWNESICK. N-linked (GlcNAc...) asparagine glycosylation is present at Asn86. Residues 92–112 traverse the membrane as a helical segment; that stretch reads VFVSTYYTLALATCFTVASLS. The Cytoplasmic segment spans residues 113-133; it reads YHRMWMVRWPVNYRLSNAKKQ. Residues 134 to 154 form a helical membrane-spanning segment; the sequence is ALHAVMGIWMVSFILSTLPSI. Residues 155-174 are Extracellular-facing; sequence GWHNNGERYYARGCQFIVSK. Residues 175-195 traverse the membrane as a helical segment; it reads IGLGFGVCFSLLLLGGIVMGL. Topologically, residues 196–275 are cytoplasmic; it reads VCVAITFYQT…SLQVTNLVSA (80 aa). A helical transmembrane segment spans residues 276 to 296; it reads IVFLYDSLTGVPILVVSFFSL. Topologically, residues 297 to 303 are extracellular; it reads KSDSAPP. A helical transmembrane segment spans residues 304–324; the sequence is WMVLAVLWCSMAQTLLLPSFI. The Cytoplasmic segment spans residues 325-588; the sequence is WSCERYRADV…GNPIFPQLTL (264 aa). Phosphoserine occurs at positions 413 and 435. 2 disordered regions span residues 511-545 and 561-588; these read ETPL…SPDS and SLTG…QLTL. Pro residues predominate over residues 514 to 525; it reads LPSPTASPGPSP. Positions 530–540 are enriched in low complexity; the sequence is PLGFSPRRLSL.

This sequence belongs to the G-protein coupled receptor 1 family.

The protein localises to the cell membrane. Functionally, orphan receptor. The polypeptide is Probable G-protein coupled receptor 162 (Gpr162) (Mus musculus (Mouse)).